Here is a 367-residue protein sequence, read N- to C-terminus: Cytochrome P450 119 (367 aa).

Positions 76, 80, 257, 259, 315, and 317 each coordinate heme.

Belongs to the cytochrome P450 family. Heme is required as a cofactor.

It is found in the cytoplasm. This chain is Cytochrome P450 119 (cyp119), found in Sulfurisphaera tokodaii (strain DSM 16993 / JCM 10545 / NBRC 100140 / 7) (Sulfolobus tokodaii).